The primary structure comprises 93 residues: Consomatin G2 (93 aa).

An N-terminal signal peptide occupies residues 1-18 (MQTAYWVMLMMMVCITAP). The propeptide occupies 19-69 (LPEGGKPNSGIRGLVPNDLTPQHTLRSLISRRQTDVLLDATLLTTPAPEQR). A disulfide bridge connects residues Cys-72 and Cys-77. Trp-74 is modified (D-tryptophan). Residues 79 to 93 (WRPYPWRRRDLNGKR) constitute a propeptide that is removed on maturation.

Belongs to the conotoxin C superfamily. Consomatin family. As to expression, expressed by the venom duct.

The protein localises to the secreted. In terms of biological role, moderately activates human somatostatin receptors (SSTR) with a preferential activation of SSTR1 and SSTR4. In vivo, does not cause behavioral changes in mice within a few minutes of intracranial injection, but causes a progressive loss of movement thereafter. Four to five hours after injection, mice recover, even with the highest dose tested. Shows antinociception and antihyperalgesia activities in two mouse models of acute pain, most probably by acting outside the central nervous system. The polypeptide is Consomatin G2 (Conus geographus (Geography cone)).